The sequence spans 529 residues: DnaJ homolog l(2)tid, mitochondrial (529 aa).

Residues 1–22 constitute a mitochondrion transit peptide; that stretch reads MISCKNLCVLRQLPLKNCRRHY. Arginine 35 carries the post-translational modification Omega-N-methylarginine. The 66-residue stretch at 80–145 folds into the J domain; sequence DYYATLGVAK…QKRREYDTYG (66 aa). Lysine 121 bears the N6-acetyllysine mark. The CR-type zinc finger occupies 230–308; it reads GVNKDVNVNV…CEGKGQTVQR (79 aa). Cysteine 243, cysteine 246, cysteine 260, cysteine 263, cysteine 282, cysteine 285, cysteine 296, and cysteine 299 together coordinate Zn(2+). Residues 243–250 form a CXXCXGXG motif; approximate repeat; it reads CPKCAGSK. A CXXCXGXG motif repeat occupies 260–267; the sequence is CQYCNGTG. The stretch at 282-289 is one CXXCXGXG motif; approximate repeat; it reads CRYCQGTR. Residues 296–303 form a CXXCXGXG motif repeat; sequence CAECEGKG. Residues 441 to 529 are disordered; the sequence is TPGQIHGMAQ…FLNKIKSMFN (89 aa). The segment covering 497-508 has biased composition (basic and acidic residues); that stretch reads QSEKSETRRKDQ.

The protein resides in the mitochondrion outer membrane. May act as a tumor suppressor in larval imaginal disks. The sequence is that of DnaJ homolog l(2)tid, mitochondrial (l(2)tid) from Drosophila virilis (Fruit fly).